Reading from the N-terminus, the 198-residue chain is Glycerol-3-phosphate acyltransferase (198 aa).

The next 5 membrane-spanning stretches (helical) occupy residues 10-30 (LIPI…WILV), 57-77 (GISF…ILIL), 86-106 (IMYL…WFLF), 118-138 (VVLS…AVVF), and 160-180 (AVTE…IVLI).

The protein belongs to the PlsY family. As to quaternary structure, probably interacts with PlsX.

The protein resides in the cell inner membrane. The catalysed reaction is an acyl phosphate + sn-glycerol 3-phosphate = a 1-acyl-sn-glycero-3-phosphate + phosphate. It functions in the pathway lipid metabolism; phospholipid metabolism. Catalyzes the transfer of an acyl group from acyl-phosphate (acyl-PO(4)) to glycerol-3-phosphate (G3P) to form lysophosphatidic acid (LPA). This enzyme utilizes acyl-phosphate as fatty acyl donor, but not acyl-CoA or acyl-ACP. This is Glycerol-3-phosphate acyltransferase from Anaplasma marginale (strain St. Maries).